The following is a 302-amino-acid chain: Glutaminase (302 aa).

Substrate-binding residues include S61, N111, E155, N162, Y186, Y238, and V256.

This sequence belongs to the glutaminase family. In terms of assembly, homotetramer.

It catalyses the reaction L-glutamine + H2O = L-glutamate + NH4(+). In Pseudomonas putida (strain ATCC 700007 / DSM 6899 / JCM 31910 / BCRC 17059 / LMG 24140 / F1), this protein is Glutaminase.